The chain runs to 382 residues: G-box-binding factor 3 (382 aa).

Positions 1 to 16 (MGNSSEEPKPPTKSDK) are enriched in basic and acidic residues. Disordered stretches follow at residues 1–26 (MGNS…DQTN), 97–221 (MGSL…GVKL), and 257–285 (EREL…AETE). Residues 111-130 (TPGTLLSIDTPTKSTGNTDN) are compositionally biased toward polar residues. Over residues 155 to 165 (ADEHKRSRNSS) the composition is skewed to basic and acidic residues. Positions 166–181 (ETDGSTDGSDGNTTGA) are enriched in low complexity. Positions 182–199 (DEPKLKRSREGTPTKDGK) are enriched in basic and acidic residues. The span at 202–216 (VQASSFHSVSPSSGD) shows a compositional bias: polar residues. One can recognise a bZIP domain in the interval 259–322 (ELKRERRKQS…DKLRGANATL (64 aa)). The basic motif stretch occupies residues 261–280 (KRERRKQSNRESARRSRLRK). The leucine-zipper stretch occupies residues 287-322 (LARKVEALTAENMALRSELNQLNEKSDKLRGANATL). Residues 329 to 382 (SEPEKRVPANMLSRVKNSGAGDKNKNQGDNDSNSTSKLHQLLDTKPRAKAVAAG) are disordered. Residues 357 to 366 (DNDSNSTSKL) are compositionally biased toward polar residues.

This sequence belongs to the bZIP family. In terms of assembly, DNA-binding heterodimer. Interacts with GBF4. Interacts with BZIP16 and BZIP68. In terms of tissue distribution, present only in dark grown leaves and roots.

It localises to the nucleus. Binds to the G-box motif (5'-CCACGTGG-3') of the rbcS-1A gene promoter. G-box and G-box-like motifs are cis-acting elements defined in promoters of certain plant genes which are regulated by such diverse stimuli as light-induction or hormone control. This Arabidopsis thaliana (Mouse-ear cress) protein is G-box-binding factor 3 (GBF3).